A 561-amino-acid polypeptide reads, in one-letter code: DNA ligase B (561 aa).

Lys125 (N6-AMP-lysine intermediate) is an active-site residue.

The protein belongs to the NAD-dependent DNA ligase family. LigB subfamily.

The catalysed reaction is NAD(+) + (deoxyribonucleotide)n-3'-hydroxyl + 5'-phospho-(deoxyribonucleotide)m = (deoxyribonucleotide)n+m + AMP + beta-nicotinamide D-nucleotide.. In terms of biological role, catalyzes the formation of phosphodiester linkages between 5'-phosphoryl and 3'-hydroxyl groups in double-stranded DNA using NAD as a coenzyme and as the energy source for the reaction. The polypeptide is DNA ligase B (Salmonella dublin (strain CT_02021853)).